Here is an 852-residue protein sequence, read N- to C-terminus: Polyphosphate kinase (852 aa).

Disordered stretches follow at residues 1–36 and 58–82; these read MATG…DRPI and SHDP…SRRK. Over residues 20–36 the composition is skewed to basic and acidic residues; that stretch reads VARDHPGCGPHRLDRPI. Positions 58-67 are enriched in polar residues; the sequence is SHDPAPSQSV. N131 is a binding site for ATP. Residues 251–303 are disordered; the sequence is GDEIGPQRTPPPSDSLDNRVPSNLKRNSDTANQQPTPAENISAPEDGAEQTEP. Positions 258–303 are insert; that stretch reads RTPPPSDSLDNRVPSNLKRNSDTANQQPTPAENISAPEDGAEQTEP. The segment covering 270–289 has biased composition (polar residues); it reads VPSNLKRNSDTANQQPTPAE. Residues R524 and R554 each coordinate Mg(2+). H584 functions as the Phosphohistidine intermediate in the catalytic mechanism. ATP contacts are provided by Y617, R713, and H741.

The protein belongs to the polyphosphate kinase 1 (PPK1) family. Requires Mg(2+) as cofactor. An intermediate of this reaction is the autophosphorylated ppk in which a phosphate is covalently linked to a histidine residue through a N-P bond.

It carries out the reaction [phosphate](n) + ATP = [phosphate](n+1) + ADP. Its function is as follows. Catalyzes the reversible transfer of the terminal phosphate of ATP to form a long-chain polyphosphate (polyP). The chain is Polyphosphate kinase from Rhodopirellula baltica (strain DSM 10527 / NCIMB 13988 / SH1).